We begin with the raw amino-acid sequence, 367 residues long: Flagellar P-ring protein (367 aa).

The signal sequence occupies residues 1-24; sequence MLRPIITLLCLTLMLCTAAGPAGA.

This sequence belongs to the FlgI family. In terms of assembly, the basal body constitutes a major portion of the flagellar organelle and consists of four rings (L,P,S, and M) mounted on a central rod.

It is found in the periplasm. Its subcellular location is the bacterial flagellum basal body. Its function is as follows. Assembles around the rod to form the L-ring and probably protects the motor/basal body from shearing forces during rotation. In Syntrophotalea carbinolica (strain DSM 2380 / NBRC 103641 / GraBd1) (Pelobacter carbinolicus), this protein is Flagellar P-ring protein.